The following is a 249-amino-acid chain: GTP cyclohydrolase 1 type 2 homolog (249 aa).

His64, His65, Asp102, His217, and Glu221 together coordinate a divalent metal cation.

Belongs to the GTP cyclohydrolase I type 2/NIF3 family. In terms of assembly, homohexamer.

The chain is GTP cyclohydrolase 1 type 2 homolog from Neisseria meningitidis serogroup A / serotype 4A (strain DSM 15465 / Z2491).